A 987-amino-acid polypeptide reads, in one-letter code: 110 kDa U5 small nuclear ribonucleoprotein component CLO (987 aa).

Residues 1–54 (MESSLYDEFGNYVGPEIESDRDSDDEVEDEDLQDKHLEENGSDGEQGPGGSNGW) are disordered. Acidic residues predominate over residues 17–32 (IESDRDSDDEVEDEDL). A tr-type G domain is found at 136–422 (ALVRNVALVG…LGVTLSNSAY (287 aa)). The segment at 145 to 152 (GHLQHGKT) is G1. 145 to 152 (GHLQHGKT) contacts GTP. The G2 stretch occupies residues 189–193 (NISIK). A G3 region spans residues 215–218 (DTPG). GTP is bound by residues 215–219 (DTPGH) and 269–272 (NKVD). Residues 269–272 (NKVD) form a G4 region. The tract at residues 395 to 397 (YSQ) is G5.

It belongs to the TRAFAC class translation factor GTPase superfamily. Classic translation factor GTPase family. In terms of assembly, interacts with BRR2A and PRP8A. As to expression, expressed in flower buds, open flowers and siliques. Expressed at low levels in rosettes leaves, cauline leaves and stems.

It is found in the nucleus speckle. Its function is as follows. Splicing factor involved in pre-mRNA splicing and component of the spliceosome. Essential for reproduction. In female gametophyte, is necessary for the egg cell and central cell fate determination and hence reproductive success. Involved in a mechanism that prevents accessory cells from adopting gametic cell fate. Is necessary to restrict LIS expression to interfere with egg-cell specification. Probable component of U5 small nuclear ribonucleoprotein (snRNP) that is required for pre-mRNA splicing. Plays an essential role in female gametogenesis and embryo development. Required for the control of polarized cell growth and cell proliferation during floral organ morphogenesis. This Arabidopsis thaliana (Mouse-ear cress) protein is 110 kDa U5 small nuclear ribonucleoprotein component CLO.